We begin with the raw amino-acid sequence, 561 residues long: Dihydroxy-acid dehydratase (561 aa).

A [2Fe-2S] cluster-binding site is contributed by cysteine 50. Position 82 (aspartate 82) interacts with Mg(2+). Cysteine 123 is a [2Fe-2S] cluster binding site. 2 residues coordinate Mg(2+): aspartate 124 and lysine 125. N6-carboxylysine is present on lysine 125. Position 195 (cysteine 195) interacts with [2Fe-2S] cluster. Position 447 (glutamate 447) interacts with Mg(2+). Catalysis depends on serine 473, which acts as the Proton acceptor.

Belongs to the IlvD/Edd family. As to quaternary structure, homodimer. Requires [2Fe-2S] cluster as cofactor. The cofactor is Mg(2+).

The catalysed reaction is (2R)-2,3-dihydroxy-3-methylbutanoate = 3-methyl-2-oxobutanoate + H2O. It carries out the reaction (2R,3R)-2,3-dihydroxy-3-methylpentanoate = (S)-3-methyl-2-oxopentanoate + H2O. It participates in amino-acid biosynthesis; L-isoleucine biosynthesis; L-isoleucine from 2-oxobutanoate: step 3/4. Its pathway is amino-acid biosynthesis; L-valine biosynthesis; L-valine from pyruvate: step 3/4. In terms of biological role, functions in the biosynthesis of branched-chain amino acids. Catalyzes the dehydration of (2R,3R)-2,3-dihydroxy-3-methylpentanoate (2,3-dihydroxy-3-methylvalerate) into 2-oxo-3-methylpentanoate (2-oxo-3-methylvalerate) and of (2R)-2,3-dihydroxy-3-methylbutanoate (2,3-dihydroxyisovalerate) into 2-oxo-3-methylbutanoate (2-oxoisovalerate), the penultimate precursor to L-isoleucine and L-valine, respectively. This Chloroflexus aurantiacus (strain ATCC 29366 / DSM 635 / J-10-fl) protein is Dihydroxy-acid dehydratase.